Reading from the N-terminus, the 603-residue chain is Zyxin (603 aa).

Pro residues predominate over residues 1–13 (MGPPPPPPPPPLL). 5 disordered regions span residues 1–131 (MGPP…HRDP), 166–193 (TQYANKSPSPPSFGNSNSEATYVSPYSS), 218–237 (ATTTTSSNSLNENNNSNKYG), 310–333 (RDEGLTESQKAANRNQTGALSASS), and 363–395 (LNQPADTSPSIVQYPRRQAPDSSRANYSATTST). A compositionally biased stretch (basic and acidic residues) spans 69-95 (VRGDVENLSDGRLDRPHQQLPDGDRTY). The span at 184–193 (EATYVSPYSS) shows a compositional bias: polar residues. Residues 218 to 234 (ATTTTSSNSLNENNNSN) are compositionally biased toward low complexity. Composition is skewed to polar residues over residues 315-333 (TESQKAANRNQTGALSASS), 363-373 (LNQPADTSPSI), and 382-391 (PDSSRANYSA). 3 LIM zinc-binding domains span residues 409-470 (NICV…SLEK), 471-529 (CTAC…KFAP), and 530-601 (RCAL…RVVS).

Belongs to the zyxin/ajuba family. Interacts with dyc-1. Interacts with glh-1 and glh-3. As to expression, expressed in neurons and body wall muscle. Expressed in pharyngeal, enteric and uterine muscles and in spermatheca.

It is found in the nucleus. The protein localises to the cytoplasm. It localises to the myofibril. The protein resides in the sarcomere. Its subcellular location is the m line. It is found in the cell projection. The protein localises to the axon. It localises to the cell junction. The protein resides in the focal adhesion. Its subcellular location is the cytoskeleton. Its function is as follows. Functions both as a mechanical stabilizer (via LIM domains) of focal adhesions, and as a sensor component for muscle cell damage (via N-terminus). Regulates, stabilizes and maintains posterior lateral mechanosensory (PLM) synaptic branch extension and new synapse formation and growth during larval development. This is Zyxin from Caenorhabditis elegans.